Consider the following 435-residue polypeptide: Mitochondrial association factor 1 form b0 (435 aa).

Residues 1–27 form the signal peptide; that stretch reads MWRIWRCRLSFLFVTGCLLGALTAGLG. Over 28–96 the chain is Vacuolar; that stretch reads SQMSDSVGRN…VTARRRRNRR (69 aa). The segment at 43–89 is disordered; sequence GVADASQEAGDVVEERTERTEEQVFAPGPPRRHSSESLFPRNPSVTA. The span at 55 to 64 shows a compositional bias: basic and acidic residues; it reads VEERTERTEE. The helical transmembrane segment at 97 to 117 threads the bilayer; that stretch reads ITLIATAVGVAVILAALYVLR. The Cytoplasmic segment spans residues 118 to 435; it reads RRRAQPPQEP…ESTYLASMLD (318 aa). Residues 120–162 form a disordered region; the sequence is RAQPPQEPEPPTRLRTPRPRAPSGQQQPSESEPPAGVPMKPGS.

It is found in the parasitophorous vacuole membrane. In terms of biological role, during host cell infection by tachyzoites, does not play a role in tethering the parasitophorous vacuole to the host mitochondria. This chain is Mitochondrial association factor 1 form b0, found in Toxoplasma gondii.